Consider the following 256-residue polypeptide: 1-(5-phosphoribosyl)-5-[(5-phosphoribosylamino)methylideneamino] imidazole-4-carboxamide isomerase (256 aa).

The active-site Proton acceptor is the aspartate 8. The Proton donor role is filled by aspartate 129.

The protein belongs to the HisA/HisF family.

Its subcellular location is the cytoplasm. The catalysed reaction is 1-(5-phospho-beta-D-ribosyl)-5-[(5-phospho-beta-D-ribosylamino)methylideneamino]imidazole-4-carboxamide = 5-[(5-phospho-1-deoxy-D-ribulos-1-ylimino)methylamino]-1-(5-phospho-beta-D-ribosyl)imidazole-4-carboxamide. It functions in the pathway amino-acid biosynthesis; L-histidine biosynthesis; L-histidine from 5-phospho-alpha-D-ribose 1-diphosphate: step 4/9. The sequence is that of 1-(5-phosphoribosyl)-5-[(5-phosphoribosylamino)methylideneamino] imidazole-4-carboxamide isomerase from Synechococcus elongatus (strain ATCC 33912 / PCC 7942 / FACHB-805) (Anacystis nidulans R2).